The following is a 221-amino-acid chain: Histone H1C (221 aa).

2 stretches are compositionally biased toward low complexity: residues 1 to 11 (MTETAATETTP) and 27 to 44 (KKAA…PSAS). 2 disordered regions span residues 1–44 (MTET…PSAS) and 123–221 (AKKK…AAKK). Residues 39–112 (SGPSASELIV…GASGSFKLNK (74 aa)) form the H15 domain. Composition is skewed to basic residues over residues 123-150 (AKKK…KPKK) and 158-221 (SPKK…AAKK).

Belongs to the histone H1/H5 family.

The protein localises to the nucleus. Its subcellular location is the chromosome. In terms of biological role, histones H1 are necessary for the condensation of nucleosome chains into higher-order structures. The protein is Histone H1C of Xenopus laevis (African clawed frog).